A 666-amino-acid chain; its full sequence is NADH-ubiquinone oxidoreductase chain 5 (666 aa).

A run of 17 helical transmembrane segments spans residues 3 to 23 (LLIL…GRWL), 31 to 51 (FSTL…FEIG), 59 to 78 (IFLV…GFLF), 82 to 101 (TVTM…IYSI), 119 to 139 (IFTF…MFLG), 168 to 190 (LIVN…WVFN), 211 to 231 (FLGF…IGAI), 251 to 271 (TPVS…FLMI), 283 to 303 (ILFI…VTGV), 311 to 333 (VIAY…SCYD), 337 to 357 (FHLA…GSVI), 375 to 395 (FMPL…GFPF), 421 to 441 (YISF…FYSF), 467 to 487 (LLMI…GYLI), 524 to 544 (WLPF…QIFL), 572 to 594 (VLYN…FKIL), and 629 to 649 (YLFF…YSYI).

The protein belongs to the complex I subunit 5 family.

It localises to the mitochondrion inner membrane. It carries out the reaction a ubiquinone + NADH + 5 H(+)(in) = a ubiquinol + NAD(+) + 4 H(+)(out). Its function is as follows. Core subunit of the mitochondrial membrane respiratory chain NADH dehydrogenase (Complex I) that is believed to belong to the minimal assembly required for catalysis. Complex I functions in the transfer of electrons from NADH to the respiratory chain. The immediate electron acceptor for the enzyme is believed to be ubiquinone. The protein is NADH-ubiquinone oxidoreductase chain 5 (ND5) of Chondrus crispus (Carrageen Irish moss).